Consider the following 157-residue polypeptide: Frd operon probable iron-sulfur subunit A (157 aa).

3 4Fe-4S ferredoxin-type domains span residues 24–55 (KGFSISTAVVCHQCEDAPCANVCPNGAIIHNK), 56–85 (DYYYVDQDKCIGCKTCVLACPYGTMEVVSR), and 100–133 (FKAEANKCDLCHHRAEGPACVEVCPTQALVCIDR). 12 residues coordinate [4Fe-4S] cluster: Cys-34, Cys-37, Cys-42, Cys-46, Cys-65, Cys-68, Cys-71, Cys-75, Cys-107, Cys-110, Cys-119, and Cys-123.

The chain is Frd operon probable iron-sulfur subunit A from Proteus vulgaris.